The sequence spans 419 residues: Ubiquitin-like modifier-activating enzyme 5 (419 aa).

Residues 18–47 form a disordered region; sequence NRLGNVKKDHPLESSSNSKPTHQPKSPAPY. Residues 30 to 41 show a composition bias toward polar residues; it reads ESSSNSKPTHQP. Gly-94, Asp-115, Lys-138, Asn-161, and Asn-194 together coordinate ATP. Residues Cys-236 and Cys-239 each coordinate Zn(2+). Cys-260 (glycyl thioester intermediate) is an active-site residue. Cys-313 and Cys-318 together coordinate Zn(2+).

It belongs to the ubiquitin-activating E1 family. UBA5 subfamily. As to quaternary structure, interacts with ufc-1. In terms of tissue distribution, expressed in the intestine.

Functionally, E1-like enzyme which activates ufm-1. Required for interaction between ufm-1 and ufc-1. This is Ubiquitin-like modifier-activating enzyme 5 from Caenorhabditis elegans.